The primary structure comprises 929 residues: Ras guanine nucleotide exchange factor M (929 aa).

Polar residues predominate over residues 1 to 15 (MWQKPSLTKSMMNEV). 2 disordered regions span residues 1-102 (MWQK…AAGS) and 169-316 (TNNN…SKSL). Residues 16-33 (SSNSPKSPTLTSSPSTQS) show a composition bias toward low complexity. Residues 44–67 (LDGGGGGSNRLIFGGSGGGSGGGS) are compositionally biased toward gly residues. 2 stretches are compositionally biased toward low complexity: residues 68–80 (LPSS…VNPF) and 169–191 (TNNN…NNDG). Residues 192–202 (SGSGSGAGGSF) show a composition bias toward gly residues. The segment covering 203–246 (IGTTTSAKTTSTTSTSAATTTTTTTTSSSSSSPSSSSPSSTSPT) has biased composition (low complexity). Residues 247-256 (IASNNDNNNK) are compositionally biased toward polar residues. Low complexity predominate over residues 270–287 (PPLTLSQSQTQQQQQQKV). Positions 295–305 (RFSTNSSGSQS) are enriched in polar residues. An N-terminal Ras-GEF domain is found at 390–528 (NKFVVVSGPK…PILDLYEKLK (139 aa)). A disordered region spans residues 540–583 (SLSGSGGISNNNNGSDLKNSNNGNNSSNNNNSSSNSSSSSSSSD). The Ras-GEF domain maps to 676 to 911 (SPQDIAKQLT…YAFSKFIESP (236 aa)).

In terms of biological role, promotes the exchange of Ras-bound GDP by GTP. The chain is Ras guanine nucleotide exchange factor M (gefM) from Dictyostelium discoideum (Social amoeba).